We begin with the raw amino-acid sequence, 513 residues long: Zinc finger CCCH-type with G patch domain-containing protein (513 aa).

The C3H1-type zinc finger occupies 155 to 178 (PCSYYLEGECRFDETKCRFSHGAL). The segment covering 252–261 (DQEEDDELSS) has biased composition (acidic residues). The disordered stretch occupies residues 252-282 (DQEEDDELSSEESNSSMNNESSDEAESDMDD). Positions 262 to 271 (EESNSSMNNE) are enriched in low complexity. Over residues 272–282 (SSDEAESDMDD) the composition is skewed to acidic residues. In terms of domain architecture, G-patch spans 312 to 358 (TRGIGSKLMEKMGYIHGTGLGSDGRGIVTPVSAQILPQGRSLDACME). Polar residues predominate over residues 478 to 495 (VQMQSHKQELATLQAQER). The segment at 478 to 513 (VQMQSHKQELATLQAQERSLSKEQQTRKSKNKMFEF) is disordered. Positions 496–513 (SLSKEQQTRKSKNKMFEF) are enriched in basic and acidic residues.

The protein localises to the nucleus. In terms of biological role, transcription repressor. This Drosophila erecta (Fruit fly) protein is Zinc finger CCCH-type with G patch domain-containing protein.